A 113-amino-acid chain; its full sequence is Large ribosomal subunit protein uL22 (113 aa).

This sequence belongs to the universal ribosomal protein uL22 family. Part of the 50S ribosomal subunit.

This protein binds specifically to 23S rRNA; its binding is stimulated by other ribosomal proteins, e.g. L4, L17, and L20. It is important during the early stages of 50S assembly. It makes multiple contacts with different domains of the 23S rRNA in the assembled 50S subunit and ribosome. In terms of biological role, the globular domain of the protein is located near the polypeptide exit tunnel on the outside of the subunit, while an extended beta-hairpin is found that lines the wall of the exit tunnel in the center of the 70S ribosome. This Xylella fastidiosa (strain M12) protein is Large ribosomal subunit protein uL22.